We begin with the raw amino-acid sequence, 373 residues long: MFRSTWNFLKRHKKKCIFLGTVLGGVYILGKYGQKKIREIQEREAAEYIAQARRQYHFESNQRTCNMTVLSMLPTLREALMQQLNSESLTALLKTRPSNKLEIWEDLKIISFTRSIVAVYSTCMLVVLLRVQLNIIGGYIYLDNAAVGKNGTTVLAPPDVQQQYLSSIQHLLGDGLTELITVIKQAVQKILGSVSLKHSLSLLDLEQKLKEIRDLVEQHKSSSWINNDGSKSLLCHYMMPDEETPLAVQACGLSPRDVTTIKLLNETRDMLESPDFSTVLNTCLSRGFSRLLDNMAEFFRPTEQDLQHGNSINSLSSVSLPLAKIIPIINGQIHSVCSETPSHFVQDLLMMEQVKDFAANVYEAFSTPQQLEK.

Over 1 to 15 the chain is Cytoplasmic; it reads MFRSTWNFLKRHKKK. The tract at residues 1–45 is targeting to peroxisomes; sequence MFRSTWNFLKRHKKKCIFLGTVLGGVYILGKYGQKKIREIQEREA. The chain crosses the membrane as a helical span at residues 16–36; that stretch reads CIFLGTVLGGVYILGKYGQKK. At 37-116 the chain is on the peroxisomal side; sequence IREIQEREAA…LKIISFTRSI (80 aa). Residues 117–140 traverse the membrane as a helical segment; sequence VAVYSTCMLVVLLRVQLNIIGGYI. Residues 120-136 form an interaction with PEX19 region; that stretch reads YSTCMLVVLLRVQLNII. Residues 141-373 lie on the Cytoplasmic side of the membrane; sequence YLDNAAVGKN…AFSTPQQLEK (233 aa).

It belongs to the peroxin-3 family. Interacts with PEX19.

Its subcellular location is the peroxisome membrane. Involved in peroxisome biosynthesis and integrity. Assembles membrane vesicles before the matrix proteins are translocated. As a docking factor for PEX19, is necessary for the import of peroxisomal membrane proteins in the peroxisomes. This chain is Peroxisomal biogenesis factor 3 (PEX3), found in Bos taurus (Bovine).